The primary structure comprises 235 residues: Sperm-associated microtubule inner protein 5 (235 aa).

In terms of assembly, microtubule inner protein component of sperm flagellar doublet microtubules. Expressed in sperm.

The protein localises to the cytoplasm. It localises to the cytoskeleton. The protein resides in the flagellum axoneme. It is found in the nucleus. Its function is as follows. Microtubule inner protein (MIP) part of the dynein-decorated doublet microtubules (DMTs) in flagellum axoneme. May serve to reinforce and thus stabilize the microtubule structure in the sperm flagella. This Bos taurus (Bovine) protein is Sperm-associated microtubule inner protein 5 (SPMIP5).